A 415-amino-acid polypeptide reads, in one-letter code: Teichoic acid D-alanyltransferase (415 aa).

The Extracellular segment spans residues 1 to 16; that stretch reads MIDFLKQLPHLEPYGN. Residues 17–36 form a helical membrane-spanning segment; it reads PFYFIYLGIALLPIFIGLFF. Residues 37-40 are Cytoplasmic-facing; the sequence is KKRF. A helical transmembrane segment spans residues 41–56; the sequence is AIYECLVSITFIVLAL. Residues 57-60 are Extracellular-facing; the sequence is TGTH. The chain crosses the membrane as a helical span at residues 61-87; the sequence is ASQILALLFYIVWQIIWVYSYKRYRSQ. The Cytoplasmic segment spans residues 88-90; that stretch reads RDN. Residues 91–115 traverse the membrane as a helical segment; that stretch reads KWVFYLHSFLVVLPLILVKVEPTIN. Residues 116-125 lie on the Extracellular side of the membrane; it reads GTQSLLNFLG. Residues 126 to 142 form a helical membrane-spanning segment; the sequence is ISYLTFRAVGMIIEMRD. Residues 143–149 lie on the Cytoplasmic side of the membrane; sequence GVLKEFT. An intramembrane segment occupies 150–179; that stretch reads LGEFLRFMLFMPTFTSGPIDRFKRFNEDYQ. Topologically, residues 180 to 183 are cytoplasmic; the sequence is SIPN. A helical transmembrane segment spans residues 184-227; the sequence is RDELLNMLEQAVKYIMLGFLYKFVLAQIFGSMLLPPLKAQALSQ. Residues 228–232 lie on the Extracellular side of the membrane; it reads GGIFN. Residues 233-264 traverse the membrane as a helical segment; sequence LPTLGVMYVYGFDLFFDFAGYSMFALAVSNLM. The Cytoplasmic segment spans residues 265 to 274; that stretch reads GIKSPINFDK. Residues 275–311 lie within the membrane without spanning it; it reads PFISRDMKEFWNRWHMSLSFWFRDFVFMRLVIVLMRN. The Cytoplasmic segment spans residues 312-316; sequence KVFKN. A helical transmembrane segment spans residues 317-336; that stretch reads RNTTSNVAYIINMMVMGFWH. The active site involves histidine 336. Topologically, residues 337 to 339 are extracellular; that stretch reads GIT. A helical membrane pass occupies residues 340-373; it reads WYYIAYGIFHGIGLVINDAWLRKKKTINKDRKKA. Residues 374 to 381 lie on the Cytoplasmic side of the membrane; it reads GLKPLPEN. Residues 382-404 traverse the membrane as a helical segment; sequence KWTKALGIFITFNTVMLSFLIFS. Over 405 to 415 the chain is Extracellular; it reads GFLNDLWFTKK.

This sequence belongs to the membrane-bound acyltransferase family.

Its subcellular location is the cell membrane. It functions in the pathway cell wall biogenesis; lipoteichoic acid biosynthesis. Its function is as follows. O-acyltransferase that catalyzes D-alanylation of both teichoic acid and lipoteichoic acid (LTA). D-alanylation of LTA plays an important role in modulating the properties of the cell wall in Gram-positive bacteria, influencing the net charge of the cell wall. Catalyzes D-alanylation from DltC carrier protein. In Streptococcus thermophilus (strain ATCC BAA-250 / LMG 18311), this protein is Teichoic acid D-alanyltransferase.